The following is a 359-amino-acid chain: Opine dehydrogenase (359 aa).

The protein belongs to the lysopine/nopaline/octopine/opine/vitopine dehydrogenases family. Homodimer.

The enzyme catalyses (2S)-2-[(R)-1-carboxyethylamino]pentanoate + NAD(+) + H2O = L-2-aminopentanoate + pyruvate + NADH + H(+). In the forward direction also acts on secondary amine dicarboxylates such as N-(1-carboxyethyl)methionine and N-(1-carboxyethyl)phenylalanine. In the reverse direction, the enzyme also acts on neutral amino acids as an amino donor. They include L-amino acids such as 2-aminopentanoic acid, 2-aminobutyric acid, 2-aminohexanoic acid, 3-chloroalanine, O-acetylserine, methionine, isoleucine, valine, phenylalanine, leucine and alanine. This is Opine dehydrogenase (odh) from Arthrobacter sp. (strain 1C).